Consider the following 182-residue polypeptide: ATP-dependent protease subunit HslV (182 aa).

The active site involves T7. 3 residues coordinate Na(+): A166, C169, and T172.

It belongs to the peptidase T1B family. HslV subfamily. A double ring-shaped homohexamer of HslV is capped on each side by a ring-shaped HslU homohexamer. The assembly of the HslU/HslV complex is dependent on binding of ATP.

It localises to the cytoplasm. The catalysed reaction is ATP-dependent cleavage of peptide bonds with broad specificity.. Allosterically activated by HslU binding. In terms of biological role, protease subunit of a proteasome-like degradation complex believed to be a general protein degrading machinery. This Albidiferax ferrireducens (strain ATCC BAA-621 / DSM 15236 / T118) (Rhodoferax ferrireducens) protein is ATP-dependent protease subunit HslV.